Consider the following 211-residue polypeptide: LexA repressor (211 aa).

Residues 27-47 (QTEIARAFGFKGVRAAQYHLE) constitute a DNA-binding region (H-T-H motif). Catalysis depends on for autocatalytic cleavage activity residues Ser-131 and Lys-168.

This sequence belongs to the peptidase S24 family. As to quaternary structure, homodimer.

The enzyme catalyses Hydrolysis of Ala-|-Gly bond in repressor LexA.. Represses a number of genes involved in the response to DNA damage (SOS response), including recA and lexA. In the presence of single-stranded DNA, RecA interacts with LexA causing an autocatalytic cleavage which disrupts the DNA-binding part of LexA, leading to derepression of the SOS regulon and eventually DNA repair. The chain is LexA repressor from Stenotrophomonas maltophilia (strain R551-3).